The sequence spans 154 residues: Probable prefoldin subunit 5 (154 aa).

It belongs to the prefoldin subunit alpha family. Heterohexamer of two PFD-alpha type and four PFD-beta type subunits.

In terms of biological role, binds specifically to cytosolic chaperonin (c-CPN) and transfers target proteins to it. Binds to nascent polypeptide chain and promotes folding in an environment in which there are many competing pathways for nonnative proteins. This chain is Probable prefoldin subunit 5, found in Caenorhabditis briggsae.